Here is a 101-residue protein sequence, read N- to C-terminus: NAD(P)H-quinone oxidoreductase subunit 4L, chloroplastic (101 aa).

Transmembrane regions (helical) follow at residues 2-22 (MLEH…FGLI), 32-52 (MCLE…SHLF), and 61-81 (IFSI…LAIV).

This sequence belongs to the complex I subunit 4L family. As to quaternary structure, NDH is composed of at least 16 different subunits, 5 of which are encoded in the nucleus.

Its subcellular location is the plastid. The protein localises to the chloroplast thylakoid membrane. It catalyses the reaction a plastoquinone + NADH + (n+1) H(+)(in) = a plastoquinol + NAD(+) + n H(+)(out). It carries out the reaction a plastoquinone + NADPH + (n+1) H(+)(in) = a plastoquinol + NADP(+) + n H(+)(out). In terms of biological role, NDH shuttles electrons from NAD(P)H:plastoquinone, via FMN and iron-sulfur (Fe-S) centers, to quinones in the photosynthetic chain and possibly in a chloroplast respiratory chain. The immediate electron acceptor for the enzyme in this species is believed to be plastoquinone. Couples the redox reaction to proton translocation, and thus conserves the redox energy in a proton gradient. In Piper cenocladum (Ant piper), this protein is NAD(P)H-quinone oxidoreductase subunit 4L, chloroplastic.